We begin with the raw amino-acid sequence, 291 residues long: Porphobilinogen deaminase (291 aa).

Cysteine 237 carries the post-translational modification S-(dipyrrolylmethanemethyl)cysteine.

It belongs to the HMBS family. As to quaternary structure, monomer. It depends on dipyrromethane as a cofactor.

The enzyme catalyses 4 porphobilinogen + H2O = hydroxymethylbilane + 4 NH4(+). Its pathway is porphyrin-containing compound metabolism; protoporphyrin-IX biosynthesis; coproporphyrinogen-III from 5-aminolevulinate: step 2/4. Functionally, tetrapolymerization of the monopyrrole PBG into the hydroxymethylbilane pre-uroporphyrinogen in several discrete steps. In Clostridium perfringens (strain 13 / Type A), this protein is Porphobilinogen deaminase.